The sequence spans 122 residues: Large ribosomal subunit protein uL14c (122 aa).

This sequence belongs to the universal ribosomal protein uL14 family. Part of the 50S ribosomal subunit.

The protein localises to the plastid. Its subcellular location is the chloroplast. Binds to 23S rRNA. This is Large ribosomal subunit protein uL14c from Drimys granadensis.